The following is a 241-amino-acid chain: tRNA (guanine-N(7)-)-methyltransferase (241 aa).

Over residues 1–10 the composition is skewed to polar residues; sequence MTESNETPNT. Residues 1-21 are disordered; sequence MTESNETPNTPEAGDESKHRR. S-adenosyl-L-methionine-binding residues include Glu71, Glu96, Asp123, and Asp146. Asp146 is an active-site residue. Residues Lys150, Asp182, and 219-222 contribute to the substrate site; that span reads TKFE.

It belongs to the class I-like SAM-binding methyltransferase superfamily. TrmB family.

It catalyses the reaction guanosine(46) in tRNA + S-adenosyl-L-methionine = N(7)-methylguanosine(46) in tRNA + S-adenosyl-L-homocysteine. Its pathway is tRNA modification; N(7)-methylguanine-tRNA biosynthesis. In terms of biological role, catalyzes the formation of N(7)-methylguanine at position 46 (m7G46) in tRNA. This chain is tRNA (guanine-N(7)-)-methyltransferase, found in Pseudomonas fluorescens (strain SBW25).